The sequence spans 702 residues: MARKTPIERYRNIGISAHIDAGKTTTTERVLFYTGVNHKLGEVHDGAATMDWMEQEQERGITITSAATTCFWKGMAGNFPAHHINIIDTPGHVDFTIEVERSMRVLDGACMVYCAVGGVQPQSETVWRQANKYKVPRLAFVNKMDRTGANFFKVYDQMRARLKANPVPMQVPIGAEDSFEGVIDLVKMKAIIWDDASQGMKFEYGDIPEHLLADAKKWRENMVEAAAEASEELMNKYLEEGDLSEADIKAAIRQRTIASEIVPMMCGTAFKNKGVQAMLDGVVEYLPSPVDIPPVPGLNEDDEPVVRKAEDTEKFSALAFKIATDPFVGQLCFIRCYSGTLNSGDTVFNSVKEKKERIGRIVQMHANQREEIKEMLAGDIAAIVGLKDTTTGDTLCDDKAIVVLERMIFPEPVISQAVEPKTKADQEKMGLALNRLAAEDPSFRVRTDEESGQTIIAGMGELHLDIIVDRMKREFGVEATVGKPQVAYRETIRKVCEEIEGKFVKQSGGRGQYGHVVLKIEPQEPGKGFEFIDAIKGGTVPREYIPAVEKGVRETLTSGVLAGYPVVDVKVTLFFGSYHDVDSNENAFRMAASMAFKDGCRKASPVILEPMMAVEVETPEDYAGTVMGDLSSRRGMVQGMDEIAGGGGKIIKAEVPLSEMFGYSTSLRSATQGRATYSMEFKHYSEAPKNVIDAIVTSKAPK.

The region spanning 8–290 is the tr-type G domain; sequence ERYRNIGISA…GVVEYLPSPV (283 aa). GTP-binding positions include 17 to 24, 88 to 92, and 142 to 145; these read AHIDAGKT, DTPGH, and NKMD.

This sequence belongs to the TRAFAC class translation factor GTPase superfamily. Classic translation factor GTPase family. EF-G/EF-2 subfamily.

The protein localises to the cytoplasm. Functionally, catalyzes the GTP-dependent ribosomal translocation step during translation elongation. During this step, the ribosome changes from the pre-translocational (PRE) to the post-translocational (POST) state as the newly formed A-site-bound peptidyl-tRNA and P-site-bound deacylated tRNA move to the P and E sites, respectively. Catalyzes the coordinated movement of the two tRNA molecules, the mRNA and conformational changes in the ribosome. The polypeptide is Elongation factor G (Janthinobacterium sp. (strain Marseille) (Minibacterium massiliensis)).